A 90-amino-acid chain; its full sequence is Evasin P458 (90 aa).

Residues 1 to 24 (MEVKTFAFLQIAVLIAFSLHSASA) form the signal peptide. Disulfide bonds link Cys-44-Cys-63, Cys-48-Cys-65, and Cys-59-Cys-76. The N-linked (GlcNAc...) asparagine glycan is linked to Asn-47.

Its subcellular location is the secreted. In terms of biological role, salivary chemokine-binding protein which binds to host chemokines CXCL1, CXCL2, CXCL3, CXCL5, CXCL6 and CXCL13. This is Evasin P458 from Ixodes ricinus (Common tick).